We begin with the raw amino-acid sequence, 503 residues long: Aspartyl/glutamyl-tRNA(Asn/Gln) amidotransferase subunit B (503 aa).

Belongs to the GatB/GatE family. GatB subfamily. Heterotrimer of A, B and C subunits.

The enzyme catalyses L-glutamyl-tRNA(Gln) + L-glutamine + ATP + H2O = L-glutaminyl-tRNA(Gln) + L-glutamate + ADP + phosphate + H(+). It carries out the reaction L-aspartyl-tRNA(Asn) + L-glutamine + ATP + H2O = L-asparaginyl-tRNA(Asn) + L-glutamate + ADP + phosphate + 2 H(+). Allows the formation of correctly charged Asn-tRNA(Asn) or Gln-tRNA(Gln) through the transamidation of misacylated Asp-tRNA(Asn) or Glu-tRNA(Gln) in organisms which lack either or both of asparaginyl-tRNA or glutaminyl-tRNA synthetases. The reaction takes place in the presence of glutamine and ATP through an activated phospho-Asp-tRNA(Asn) or phospho-Glu-tRNA(Gln). This is Aspartyl/glutamyl-tRNA(Asn/Gln) amidotransferase subunit B from Cereibacter sphaeroides (strain ATCC 17023 / DSM 158 / JCM 6121 / CCUG 31486 / LMG 2827 / NBRC 12203 / NCIMB 8253 / ATH 2.4.1.) (Rhodobacter sphaeroides).